The primary structure comprises 185 residues: Dual-action ribosomal maturation protein DarP (185 aa).

Belongs to the DarP family.

The protein localises to the cytoplasm. Member of a network of 50S ribosomal subunit biogenesis factors which assembles along the 30S-50S interface, preventing incorrect 23S rRNA structures from forming. Promotes peptidyl transferase center (PTC) maturation. The chain is Dual-action ribosomal maturation protein DarP from Vibrio vulnificus (strain YJ016).